Here is a 468-residue protein sequence, read N- to C-terminus: Bifunctional protein HldE (468 aa).

A ribokinase region spans residues 1–315 (MAKKVEILVV…ELLRSRANAE (315 aa)). 192–195 (NRKE) is an ATP binding site. D260 is a catalytic residue. The interval 340 to 468 (FTNGCFDILH…IVKRIKDADK (129 aa)) is cytidylyltransferase.

In the N-terminal section; belongs to the carbohydrate kinase PfkB family. It in the C-terminal section; belongs to the cytidylyltransferase family. Homodimer.

The enzyme catalyses D-glycero-beta-D-manno-heptose 7-phosphate + ATP = D-glycero-beta-D-manno-heptose 1,7-bisphosphate + ADP + H(+). It carries out the reaction D-glycero-beta-D-manno-heptose 1-phosphate + ATP + H(+) = ADP-D-glycero-beta-D-manno-heptose + diphosphate. Its pathway is nucleotide-sugar biosynthesis; ADP-L-glycero-beta-D-manno-heptose biosynthesis; ADP-L-glycero-beta-D-manno-heptose from D-glycero-beta-D-manno-heptose 7-phosphate: step 1/4. The protein operates within nucleotide-sugar biosynthesis; ADP-L-glycero-beta-D-manno-heptose biosynthesis; ADP-L-glycero-beta-D-manno-heptose from D-glycero-beta-D-manno-heptose 7-phosphate: step 3/4. Functionally, catalyzes the phosphorylation of D-glycero-D-manno-heptose 7-phosphate at the C-1 position to selectively form D-glycero-beta-D-manno-heptose-1,7-bisphosphate. Catalyzes the ADP transfer from ATP to D-glycero-beta-D-manno-heptose 1-phosphate, yielding ADP-D-glycero-beta-D-manno-heptose. The polypeptide is Bifunctional protein HldE (Campylobacter curvus (strain 525.92)).